Reading from the N-terminus, the 439-residue chain is Xylose isomerase (439 aa).

Catalysis depends on residues His99 and Asp102. Residues Glu230, Glu266, His269, Asp294, Asp305, Asp307, and Asp337 each contribute to the Mg(2+) site.

The protein belongs to the xylose isomerase family. In terms of assembly, homotetramer. Mg(2+) is required as a cofactor.

It localises to the cytoplasm. The catalysed reaction is alpha-D-xylose = alpha-D-xylulofuranose. This Shouchella clausii (strain KSM-K16) (Alkalihalobacillus clausii) protein is Xylose isomerase.